We begin with the raw amino-acid sequence, 238 residues long: Gas vesicle protein F (238 aa).

Belongs to the gas vesicle GvpF/GvpL family. As to quaternary structure, binds GvpA.

Its subcellular location is the gas vesicle. Its function is as follows. A minor component of the gas vesicle, may be involved in preventing GvpA aggregation during gas vesicle nucleation. Gas vesicles are hollow, gas filled proteinaceous nanostructures found in some microorganisms. It is not clear what function gas vesicles perform in soil bacteria. The polypeptide is Gas vesicle protein F (Streptomyces sp. (strain CB03234)).